A 336-amino-acid chain; its full sequence is tRNA(Ile)-lysidine synthase (336 aa).

40-45 contacts ATP; it reads SGGQDS.

It belongs to the tRNA(Ile)-lysidine synthase family.

It localises to the cytoplasm. It catalyses the reaction cytidine(34) in tRNA(Ile2) + L-lysine + ATP = lysidine(34) in tRNA(Ile2) + AMP + diphosphate + H(+). Ligates lysine onto the cytidine present at position 34 of the AUA codon-specific tRNA(Ile) that contains the anticodon CAU, in an ATP-dependent manner. Cytidine is converted to lysidine, thus changing the amino acid specificity of the tRNA from methionine to isoleucine. The polypeptide is tRNA(Ile)-lysidine synthase (Prochlorococcus marinus subsp. pastoris (strain CCMP1986 / NIES-2087 / MED4)).